The following is a 252-amino-acid chain: Protein IL-40 (252 aa).

Residues 1–18 (MALLQLLLFAMLAACGFS) form the signal peptide. Residues Asn-82 and Asn-177 are each glycosylated (N-linked (GlcNAc...) asparagine).

Expressed in bone marrow, spleen and lymph node.

The protein resides in the secreted. Functionally, probable B cell-associated cytokine that plays a role in the regulation of humoral immune responses. Involved in lymphocyte B cell development and immunoglobulin/IgA production. The sequence is that of Protein IL-40 from Mus musculus (Mouse).